The sequence spans 29 residues: Cytochrome b6-f complex subunit 8 (29 aa).

A helical membrane pass occupies residues 3–23; it reads IDVLGWVALLVVFTWSIAMVV.

It belongs to the PetN family. The 4 large subunits of the cytochrome b6-f complex are cytochrome b6, subunit IV (17 kDa polypeptide, PetD), cytochrome f and the Rieske protein, while the 4 small subunits are PetG, PetL, PetM and PetN. The complex functions as a dimer.

Its subcellular location is the cellular thylakoid membrane. Functionally, component of the cytochrome b6-f complex, which mediates electron transfer between photosystem II (PSII) and photosystem I (PSI), cyclic electron flow around PSI, and state transitions. The polypeptide is Cytochrome b6-f complex subunit 8 (Mastigocladus laminosus (Fischerella sp.)).